A 66-amino-acid chain; its full sequence is DNA gyrase inhibitor YacG (66 aa).

Residues C9, C12, C28, and C32 each coordinate Zn(2+).

Belongs to the DNA gyrase inhibitor YacG family. In terms of assembly, interacts with GyrB. Zn(2+) serves as cofactor.

Functionally, inhibits all the catalytic activities of DNA gyrase by preventing its interaction with DNA. Acts by binding directly to the C-terminal domain of GyrB, which probably disrupts DNA binding by the gyrase. The sequence is that of DNA gyrase inhibitor YacG from Pseudomonas fluorescens (strain Pf0-1).